The chain runs to 436 residues: 3-ketoacyl-CoA thiolase (436 aa).

The active-site Acyl-thioester intermediate is the C99. Active-site proton acceptor residues include H392 and C422.

This sequence belongs to the thiolase-like superfamily. Thiolase family. As to quaternary structure, heterotetramer of two alpha chains (FadJ) and two beta chains (FadI).

The protein resides in the cytoplasm. It catalyses the reaction an acyl-CoA + acetyl-CoA = a 3-oxoacyl-CoA + CoA. The protein operates within lipid metabolism; fatty acid beta-oxidation. Catalyzes the final step of fatty acid oxidation in which acetyl-CoA is released and the CoA ester of a fatty acid two carbons shorter is formed. This Shewanella denitrificans (strain OS217 / ATCC BAA-1090 / DSM 15013) protein is 3-ketoacyl-CoA thiolase.